A 447-amino-acid chain; its full sequence is Serine--tRNA ligase (447 aa).

Residue 245–247 (TAE) participates in L-serine binding. ATP contacts are provided by residues 276 to 278 (RKE) and valine 292. Glutamate 299 is an L-serine binding site. Position 363–366 (363–366 (ELAS)) interacts with ATP. Threonine 398 provides a ligand contact to L-serine.

This sequence belongs to the class-II aminoacyl-tRNA synthetase family. Type-1 seryl-tRNA synthetase subfamily. In terms of assembly, homodimer. The tRNA molecule binds across the dimer.

The protein resides in the cytoplasm. The enzyme catalyses tRNA(Ser) + L-serine + ATP = L-seryl-tRNA(Ser) + AMP + diphosphate + H(+). It carries out the reaction tRNA(Sec) + L-serine + ATP = L-seryl-tRNA(Sec) + AMP + diphosphate + H(+). It participates in aminoacyl-tRNA biosynthesis; selenocysteinyl-tRNA(Sec) biosynthesis; L-seryl-tRNA(Sec) from L-serine and tRNA(Sec): step 1/1. Its function is as follows. Catalyzes the attachment of serine to tRNA(Ser). Is also able to aminoacylate tRNA(Sec) with serine, to form the misacylated tRNA L-seryl-tRNA(Sec), which will be further converted into selenocysteinyl-tRNA(Sec). The sequence is that of Serine--tRNA ligase from Pyrobaculum neutrophilum (strain DSM 2338 / JCM 9278 / NBRC 100436 / V24Sta) (Thermoproteus neutrophilus).